The primary structure comprises 98 residues: Large ribosomal subunit protein uL23 (98 aa).

Belongs to the universal ribosomal protein uL23 family. In terms of assembly, part of the 50S ribosomal subunit. Contacts protein L29, and trigger factor when it is bound to the ribosome.

Functionally, one of the early assembly proteins it binds 23S rRNA. One of the proteins that surrounds the polypeptide exit tunnel on the outside of the ribosome. Forms the main docking site for trigger factor binding to the ribosome. This is Large ribosomal subunit protein uL23 from Bifidobacterium longum (strain DJO10A).